We begin with the raw amino-acid sequence, 401 residues long: Probable trafficking protein particle complex subunit 13 homolog (401 aa).

This sequence belongs to the TRAPPC13 family.

This is Probable trafficking protein particle complex subunit 13 homolog from Caenorhabditis elegans.